A 161-amino-acid chain; its full sequence is Nucleotide-binding protein Shew_2893 (161 aa).

It belongs to the YajQ family.

Functionally, nucleotide-binding protein. The chain is Nucleotide-binding protein Shew_2893 from Shewanella loihica (strain ATCC BAA-1088 / PV-4).